A 97-amino-acid chain; its full sequence is Peptide YY (97 aa).

A signal peptide spans 1-28 (MVFVRRPWPALTTVLLALLVCLGALVDA). Serine 41 carries the phosphoserine modification. Tyrosine 64 is subject to Tyrosine amide. The segment at 65 to 97 (GKRDGPDTLLSKTFFPDGEDRPVRSRSEGPDLW) is disordered. Positions 68 to 97 (DGPDTLLSKTFFPDGEDRPVRSRSEGPDLW) are excised as a propeptide. A compositionally biased stretch (basic and acidic residues) spans 82 to 97 (GEDRPVRSRSEGPDLW).

This sequence belongs to the NPY family. In terms of processing, the peptide YY form is cleaved at Pro-30 by the prolyl endopeptidase FAP (seprase) activity (in vitro) to generate peptide YY(3-36).

It is found in the secreted. This gut peptide inhibits exocrine pancreatic secretion, has a vasoconstrictory action and inhibitis jejunal and colonic mobility. This Homo sapiens (Human) protein is Peptide YY (PYY).